The chain runs to 104 residues: Large ribosomal subunit protein bL21 (104 aa).

It belongs to the bacterial ribosomal protein bL21 family. In terms of assembly, part of the 50S ribosomal subunit. Contacts protein L20.

Its function is as follows. This protein binds to 23S rRNA in the presence of protein L20. This is Large ribosomal subunit protein bL21 from Desulfosudis oleivorans (strain DSM 6200 / JCM 39069 / Hxd3) (Desulfococcus oleovorans).